We begin with the raw amino-acid sequence, 348 residues long: Phosphate acyltransferase (348 aa).

This sequence belongs to the PlsX family. As to quaternary structure, homodimer. Probably interacts with PlsY.

The protein localises to the cytoplasm. The enzyme catalyses a fatty acyl-[ACP] + phosphate = an acyl phosphate + holo-[ACP]. It functions in the pathway lipid metabolism; phospholipid metabolism. In terms of biological role, catalyzes the reversible formation of acyl-phosphate (acyl-PO(4)) from acyl-[acyl-carrier-protein] (acyl-ACP). This enzyme utilizes acyl-ACP as fatty acyl donor, but not acyl-CoA. The protein is Phosphate acyltransferase of Pectobacterium atrosepticum (strain SCRI 1043 / ATCC BAA-672) (Erwinia carotovora subsp. atroseptica).